We begin with the raw amino-acid sequence, 270 residues long: Decarboxylase NovR (270 aa).

The protein belongs to the aldolase class II family.

The protein operates within antibiotic biosynthesis; novobiocin biosynthesis. Functionally, may mediate the 2 consecutive oxidative decarboxylation steps in the biosynthesis of the prenylated hydroxybenzoic acid moiety of novobiocin, an aminocoumarin family antibiotic that targets bacterial DNA gyrases. This is Decarboxylase NovR (novR) from Streptomyces niveus (Streptomyces spheroides).